The primary structure comprises 250 residues: ATP synthase subunit a (250 aa).

The next 5 membrane-spanning stretches (helical) occupy residues 27–47 (TDTV…AFYL), 83–103 (IAPF…ISNW), 129–149 (INYV…AGIW), 191–211 (IFAG…IMWA), and 219–239 (FDLF…ILYF).

It belongs to the ATPase A chain family. F-type ATPases have 2 components, CF(1) - the catalytic core - and CF(0) - the membrane proton channel. CF(1) has five subunits: alpha(3), beta(3), gamma(1), delta(1), epsilon(1). CF(0) has three main subunits: a(1), b(2) and c(9-12). The alpha and beta chains form an alternating ring which encloses part of the gamma chain. CF(1) is attached to CF(0) by a central stalk formed by the gamma and epsilon chains, while a peripheral stalk is formed by the delta and b chains.

It is found in the cell membrane. Its function is as follows. Key component of the proton channel; it plays a direct role in the translocation of protons across the membrane. This Mycobacterium ulcerans (strain Agy99) protein is ATP synthase subunit a.